The following is a 118-amino-acid chain: Vitelline membrane protein Vm32E (118 aa).

An N-terminal signal peptide occupies residues 1–17 (MKIVALTLVAFVALAGA). In terms of domain architecture, VM spans 36–75 (GYPAPPCPTNYLFSCQPNLAPAPCAQEAQAPAYGSAGAYT).

It belongs to the vitelline membrane family.

It localises to the secreted. Its function is as follows. Major early eggshell protein. In Drosophila simulans (Fruit fly), this protein is Vitelline membrane protein Vm32E.